A 398-amino-acid chain; its full sequence is Riboflavin biosynthesis protein RibBA (398 aa).

Residues 1–199 form a DHBP synthase region; sequence MFHPIEEALD…IKDLIQYRYN (199 aa). Residues 26-27, Asp-31, 138-142, and Glu-162 each bind D-ribulose 5-phosphate; these read RE and RAGHT. Glu-27 lines the Mg(2+) pocket. Mg(2+) is bound at residue His-141. The segment at 200–398 is GTP cyclohydrolase II; the sequence is LTTLVEREVD…MNKLGHLLHF (199 aa). 251 to 255 provides a ligand contact to GTP; that stretch reads RVHSE. Residues Cys-256, Cys-267, and Cys-269 each contribute to the Zn(2+) site. Residues Gln-272, 294–296, and Thr-316 contribute to the GTP site; that span reads EGR. Asp-328 (proton acceptor; for GTP cyclohydrolase activity) is an active-site residue. The active-site Nucleophile; for GTP cyclohydrolase activity is the Arg-330. The GTP site is built by Thr-351 and Lys-356.

This sequence in the N-terminal section; belongs to the DHBP synthase family. In the C-terminal section; belongs to the GTP cyclohydrolase II family. The cofactor is Mg(2+). It depends on Mn(2+) as a cofactor. Requires Zn(2+) as cofactor.

The enzyme catalyses D-ribulose 5-phosphate = (2S)-2-hydroxy-3-oxobutyl phosphate + formate + H(+). It catalyses the reaction GTP + 4 H2O = 2,5-diamino-6-hydroxy-4-(5-phosphoribosylamino)-pyrimidine + formate + 2 phosphate + 3 H(+). It functions in the pathway cofactor biosynthesis; riboflavin biosynthesis; 2-hydroxy-3-oxobutyl phosphate from D-ribulose 5-phosphate: step 1/1. Its pathway is cofactor biosynthesis; riboflavin biosynthesis; 5-amino-6-(D-ribitylamino)uracil from GTP: step 1/4. Its function is as follows. Catalyzes the conversion of D-ribulose 5-phosphate to formate and 3,4-dihydroxy-2-butanone 4-phosphate. Functionally, catalyzes the conversion of GTP to 2,5-diamino-6-ribosylamino-4(3H)-pyrimidinone 5'-phosphate (DARP), formate and pyrophosphate. This Bacillus subtilis (strain 168) protein is Riboflavin biosynthesis protein RibBA.